The sequence spans 581 residues: Chaperonin GroEL 1 (581 aa).

ATP contacts are provided by residues 29–32 (TIGP), 86–90 (DGTTT), G413, and D492.

This sequence belongs to the chaperonin (HSP60) family. As to quaternary structure, forms a cylinder of 14 subunits composed of two heptameric rings stacked back-to-back. Interacts with the co-chaperonin GroES.

The protein resides in the cytoplasm. The enzyme catalyses ATP + H2O + a folded polypeptide = ADP + phosphate + an unfolded polypeptide.. Functionally, together with its co-chaperonin GroES, plays an essential role in assisting protein folding. The GroEL-GroES system forms a nano-cage that allows encapsulation of the non-native substrate proteins and provides a physical environment optimized to promote and accelerate protein folding. The sequence is that of Chaperonin GroEL 1 from Prochlorococcus marinus subsp. pastoris (strain CCMP1986 / NIES-2087 / MED4).